A 152-amino-acid polypeptide reads, in one-letter code: 6,7-dimethyl-8-ribityllumazine synthase (152 aa).

5-amino-6-(D-ribitylamino)uracil-binding positions include Phe21, 55 to 57 (AFE), and 79 to 81 (AVI). Residue 84–85 (AT) participates in (2S)-2-hydroxy-3-oxobutyl phosphate binding. The active-site Proton donor is His87. Phe112 contacts 5-amino-6-(D-ribitylamino)uracil. Arg126 provides a ligand contact to (2S)-2-hydroxy-3-oxobutyl phosphate.

Belongs to the DMRL synthase family. Forms an icosahedral capsid composed of 60 subunits, arranged as a dodecamer of pentamers.

It catalyses the reaction (2S)-2-hydroxy-3-oxobutyl phosphate + 5-amino-6-(D-ribitylamino)uracil = 6,7-dimethyl-8-(1-D-ribityl)lumazine + phosphate + 2 H2O + H(+). Its pathway is cofactor biosynthesis; riboflavin biosynthesis; riboflavin from 2-hydroxy-3-oxobutyl phosphate and 5-amino-6-(D-ribitylamino)uracil: step 1/2. Its function is as follows. Catalyzes the formation of 6,7-dimethyl-8-ribityllumazine by condensation of 5-amino-6-(D-ribitylamino)uracil with 3,4-dihydroxy-2-butanone 4-phosphate. This is the penultimate step in the biosynthesis of riboflavin. The protein is 6,7-dimethyl-8-ribityllumazine synthase of Exiguobacterium sibiricum (strain DSM 17290 / CCUG 55495 / CIP 109462 / JCM 13490 / 255-15).